The primary structure comprises 216 residues: Cytidylate kinase (216 aa).

An ATP-binding site is contributed by 9 to 17 (GPAASGKGT).

This sequence belongs to the cytidylate kinase family. Type 1 subfamily.

Its subcellular location is the cytoplasm. It carries out the reaction CMP + ATP = CDP + ADP. It catalyses the reaction dCMP + ATP = dCDP + ADP. The chain is Cytidylate kinase from Caulobacter sp. (strain K31).